Consider the following 305-residue polypeptide: Protoheme IX farnesyltransferase (305 aa).

The next 9 membrane-spanning stretches (helical) occupy residues 26–46, 47–67, 98–118, 119–139, 147–167, 174–194, 220–240, 243–263, and 284–304; these read VMSL…QPVN, PFVA…SGAL, LAVG…AANW, FAAG…TIWL, IVIG…CATG, LLMF…LALF, IFAY…TSVG, LYLA…WQIL, and LSLY…WVGG.

Belongs to the UbiA prenyltransferase family. Protoheme IX farnesyltransferase subfamily. In terms of assembly, interacts with CtaA.

It localises to the cell inner membrane. The enzyme catalyses heme b + (2E,6E)-farnesyl diphosphate + H2O = Fe(II)-heme o + diphosphate. The protein operates within porphyrin-containing compound metabolism; heme O biosynthesis; heme O from protoheme: step 1/1. In terms of biological role, converts heme B (protoheme IX) to heme O by substitution of the vinyl group on carbon 2 of heme B porphyrin ring with a hydroxyethyl farnesyl side group. This is Protoheme IX farnesyltransferase from Paracoccus denitrificans (strain Pd 1222).